We begin with the raw amino-acid sequence, 836 residues long: Protein translocase subunit SecA (836 aa).

ATP-binding positions include Q85, 103-107 (GEGKT), and D492. The interval 786 to 817 (REQVAKETSTNQGGDDTLKKQPIKKEPKIGRN) is disordered. Basic and acidic residues predominate over residues 801–816 (DTLKKQPIKKEPKIGR). C820, C822, C831, and C832 together coordinate Zn(2+).

Belongs to the SecA family. In terms of assembly, monomer and homodimer. Part of the essential Sec protein translocation apparatus which comprises SecA, SecYEG and auxiliary proteins SecDF. Other proteins may also be involved. Zn(2+) serves as cofactor.

It localises to the cell membrane. It is found in the cytoplasm. The catalysed reaction is ATP + H2O + cellular proteinSide 1 = ADP + phosphate + cellular proteinSide 2.. Part of the Sec protein translocase complex. Interacts with the SecYEG preprotein conducting channel. Has a central role in coupling the hydrolysis of ATP to the transfer of proteins into and across the cell membrane, serving as an ATP-driven molecular motor driving the stepwise translocation of polypeptide chains across the membrane. The polypeptide is Protein translocase subunit SecA (Clostridium tetani (strain Massachusetts / E88)).